Reading from the N-terminus, the 372-residue chain is Ciliary neurotrophic factor receptor subunit alpha (372 aa).

Positions Met-1 to Thr-22 are cleaved as a signal peptide. Residues Pro-27–His-104 form the Ig-like C2-type domain. Cys-46 and Cys-89 are disulfide-bonded. 4 N-linked (GlcNAc...) asparagine glycosylation sites follow: Asn-60, Asn-70, Asn-142, and Asn-190. Fibronectin type-III domains are found at residues Pro-108–Asp-205 and Pro-206–Pro-306. The WSXWS motif motif lies at Trp-290–Ser-294. Positions Pro-301–Gly-338 are disordered. Residues Thr-311–Leu-326 are compositionally biased toward low complexity. Residue Ser-342 is the site of GPI-anchor amidated serine attachment. Positions Gly-343–Ile-372 are cleaved as a propeptide — removed in mature form.

This sequence belongs to the type I cytokine receptor family. Type 3 subfamily. Forms a heterotrimer with LIFR and IL6ST. Interacts with heterodimeric neurotropic cytokine composed of CLCF1/CLC and CRLF1/CLF-1. Either alone or in complex with the heterodimer CLCF1-CRLF1 interacts with SORL1; this interaction may promote internalization and lysosomal degradation.

Its subcellular location is the cell membrane. In terms of biological role, binds to CNTF. The alpha subunit provides the receptor specificity. The chain is Ciliary neurotrophic factor receptor subunit alpha (Cntfr) from Mus musculus (Mouse).